A 72-amino-acid chain; its full sequence is UPF0154 protein Bcer98_2334 (72 aa).

A helical transmembrane segment spans residues 3–23 (IWSGILVGVVALLAGVALGFF).

Belongs to the UPF0154 family.

Its subcellular location is the cell membrane. This Bacillus cytotoxicus (strain DSM 22905 / CIP 110041 / 391-98 / NVH 391-98) protein is UPF0154 protein Bcer98_2334.